Consider the following 4080-residue polypeptide: Hybrid PKS-NRPS synthetase poxE (4080 aa).

Positions 8 to 442 (REPIAIVGSG…GTNAHAIIEA (435 aa)) constitute a Ketosynthase family 3 (KS3) domain. Active-site for beta-ketoacyl synthase activity residues include Cys181, His320, and His362. The interval 554 to 878 (VFTGQGAQWA…QRGMNDVEAM (325 aa)) is malonyl-CoA:ACP transacylase (MAT) domain. Residues 944-1078 (HPILGTRCPD…GRLVITYGPV (135 aa)) are N-terminal hotdog fold. In terms of domain architecture, PKS/mFAS DH spans 944–1246 (HPILGTRCPD…AVPLEATNAD (303 aa)). The tract at residues 945-1243 (PILGTRCPDG…GIHAVPLEAT (299 aa)) is dehydratase (DH) domain. His976 serves as the catalytic Proton acceptor; for dehydratase activity. The C-terminal hotdog fold stretch occupies residues 1093–1246 (MVDVPSERFY…AVPLEATNAD (154 aa)). Asp1152 serves as the catalytic Proton donor; for dehydratase activity. Residues 1400-1585 (HFSDYLASVV…GVDTFTSDAD (186 aa)) form a methyltransferase (MT) domain region. The segment at 2118 to 2292 (TYWLVGLTGS…AGSVMNIGAI (175 aa)) is ketoreductase (KR)domain. The tract at residues 2399-2478 (TTDEIYEVIK…TIGEIIKFVL (80 aa)) is peptidyl carrier protein. Positions 2405–2481 (EVIKECFIVK…EIIKFVLEKL (77 aa)) constitute a Carrier 1 domain. O-(pantetheine 4'-phosphoryl)serine is present on Ser2441. Residues 2488 to 2569 (SLGLSPPTGA…AASPSIHTEE (82 aa)) are disordered. The span at 2511–2525 (VVVERRNVPRLEKKI) shows a compositional bias: basic and acidic residues. Low complexity predominate over residues 2528–2545 (SAGSRTSSSVTGTSKSVS). The segment covering 2551-2565 (DTASSQTSEAASPSI) has biased composition (polar residues). The segment at 2607–3036 (KEPLSFGQSR…DSKQPGGHVS (430 aa)) is condensation. Positions 3069-3478 (DMAKQYPQKL…DGRLRIEGRI (410 aa)) are adenylation. The Carrier 2 domain maps to 3593 to 3673 (AHLNEAQAQM…KMALLIKPQE (81 aa)). The tract at residues 3598–3670 (AQAQMVQLWE…TLEKMALLIK (73 aa)) is thiolation. An O-(pantetheine 4'-phosphoryl)serine modification is found at Ser3633. A reductase (RED) domain region spans residues 3740-3959 (LTGATGFIGQ…DFVPVEQVVR (220 aa)).

This sequence in the C-terminal section; belongs to the NRP synthetase family.

Its pathway is secondary metabolite biosynthesis. Functionally, hybrid PKS-NRPS synthetase; part of the gene cluster that mediates the biosynthesis of oxaleimides, cytotoxic compounds containing an unusual disubstituted succinimide moiety. The first step of the pathway is provided by the HR-PKS poxF that serves in a new mode of collaborative biosynthesis with the PKS-NRPS poxE, by providing the olefin containing amino acid substrate via the synthesis of an ACP-bound dec-4-enoate. The cytochrome P450 monooxygenase poxM-catalyzed oxidation at the alpha-position creates the enzyme-bound 2-hydroxydec-4-enoyl-ACP thioester, which may be prone to spontaneous hydrolysis to yield 2-hydroxydec-4-enoic acid due to increased electrophilicity of the carbonyl. 2-hydroxydec-4-enoic acid can then be further oxidized by poxM to yield the alpha-ketoacid 2-oxodec-4-enoicacid, which is reductively aminated by the aminotransferase poxL to yield (S,E)-2-aminodec-4-enoic acid. The Hybrid PKS-NRPS synthetase poxE then performs condensation between the octaketide product of its PKS modules and the amino group of (S,E)-2-aminodec-4-enoic acid which is activated and incorporated by the adenylation domain. The resulting aminoacyl product can be cyclized by the Diels-Alderase PoxQ and reductively released by the reductive (R) domain of poxE to yield an aldehyde intermediate. The released aldehyde is then substrate for a Knoevenagel condensation by the hydrolyase poxO followed by an oxidation at the 5-position of the pyrrolidone ring. The presence of the olefin from the amino acid building block allows for migration of the substituted allyl group to occur. This allylic transposition reaction takes place in a conjugate addition, semipinacol-like fashion to yield a succinimide intermediate. Iterative two-electron oxidations of the C7 methyl of the succinimide intermediate to the carboxylic acid can be catalyzed by one of two remaining cytochrome P450 monooxygenasess poxC or poxD to yield oxaleimide A. Subsequent oxidation yields the maleimide scaffold oxaleimide I. Both oxaleimide A and oxaleimide I can undergo oxidative modifications in the decalin ring to yield the series of products oxaleimides B to H. The sequence is that of Hybrid PKS-NRPS synthetase poxE from Penicillium oxalicum.